Reading from the N-terminus, the 1785-residue chain is Brefeldin A-inhibited guanine nucleotide-exchange protein 2 (1785 aa).

Met-1 carries the post-translational modification N-acetylmethionine. The segment at 2-224 is DCB; DCB:DCB domain and DCB:HUS domain interaction; the sequence is QESQTKSMFV…KPQSPVIQAA (223 aa). 3 positions are modified to phosphoserine: Ser-214, Ser-218, and Ser-227. The tract at residues 232-285 is disordered; the sequence is RLKHSQAQSKPTTPEKTDLTNGEHARSDSGKVSTENGDAPRERGSSLSGTDDGA. Thr-244 carries the post-translational modification Phosphothreonine. Residues 244–260 show a composition bias toward basic and acidic residues; the sequence is TPEKTDLTNGEHARSDS. Phosphoserine occurs at positions 277, 348, and 349. The segment at 508 to 528 is HUS; DCB:HUS domain interaction; that stretch reads ADAQCVVDIYVNYDCDLNAAN. At Ser-614 the chain carries Phosphoserine. Thr-616 carries the phosphothreonine modification. Ser-617 carries the post-translational modification Phosphoserine. Thr-626 is modified (phosphothreonine). Residues 654–785 form the SEC7 domain; the sequence is FNKKPKRGIQ…IIMLTTDLHS (132 aa). Phosphoserine is present on residues Ser-700, Ser-1511, Ser-1513, Ser-1514, Ser-1525, Ser-1528, Ser-1534, and Ser-1782. Residues 1514-1532 are compositionally biased toward polar residues; it reads SIDKNPSERGQSQLSNPTD. Residues 1514-1535 form a disordered region; sequence SIDKNPSERGQSQLSNPTDDSW.

As to quaternary structure, homodimer. Interacts with ARFGEF1/BIG1; both proteins are probably part of the same or very similar macromolecular complexes. Interacts with PRKAR1A, PRKAR2A, PRKAR1B, PRKAR2B, PPP1CC, PDE3A, TNFRSF1A, MYCBP and EXOC7. Interacts with GABRB1, GABRB2 and GABRB3. Post-translationally, in vitro phosphorylated by PKA reducing its GEF activity and dephosphorylated by phosphatase PP1. As to expression, expressed in placenta, lung, heart, brain, kidney and pancreas.

The protein localises to the cytoplasm. Its subcellular location is the membrane. It is found in the golgi apparatus. The protein resides in the perinuclear region. It localises to the trans-Golgi network. The protein localises to the endosome. Its subcellular location is the cytoskeleton. It is found in the microtubule organizing center. The protein resides in the centrosome. It localises to the cell projection. The protein localises to the dendrite. Its subcellular location is the cytoplasmic vesicle. It is found in the synapse. Inhibited by brefeldin A. In terms of biological role, promotes guanine-nucleotide exchange on ARF1 and ARF3 and to a lower extent on ARF5 and ARF6. Promotes the activation of ARF1/ARF5/ARF6 through replacement of GDP with GTP. Involved in the regulation of Golgi vesicular transport. Required for the integrity of the endosomal compartment. Involved in trafficking from the trans-Golgi network (TGN) to endosomes and is required for membrane association of the AP-1 complex and GGA1. Seems to be involved in recycling of the transferrin receptor from recycling endosomes to the plasma membrane. Probably is involved in the exit of GABA(A) receptors from the endoplasmic reticulum. Involved in constitutive release of tumor necrosis factor receptor 1 via exosome-like vesicles; the function seems to involve PKA and specifically PRKAR2B. Proposed to act as A kinase-anchoring protein (AKAP) and may mediate crosstalk between Arf and PKA pathways. In Homo sapiens (Human), this protein is Brefeldin A-inhibited guanine nucleotide-exchange protein 2 (ARFGEF2).